Consider the following 2892-residue polypeptide: Inositol 1,4,5-trisphosphate receptor itr-1 (2892 aa).

The Cytoplasmic segment spans residues 1–2475 (MNPSYGRVRK…YPLPEHSNSS (2475 aa)). 4 MIR domains span residues 192–246 (GNVI…IEPA), 319–379 (QNSV…VQVV), 386–466 (GGTA…LGPT), and 490–551 (NKEV…LLPV). 357–361 (RMTNR) provides a ligand contact to 1D-myo-inositol 1,4,5-trisphosphate. 1D-myo-inositol 1,4,5-trisphosphate is bound by residues 625–628 (KLLR) and 689–691 (YRK). The tract at residues 1030 to 1056 (MMRGGNKENSKDLAKTPSVTAEEAGRT) is disordered. Residues 1034 to 1043 (GNKENSKDLA) are compositionally biased toward basic and acidic residues. The chain crosses the membrane as a helical span at residues 2476-2496 (ISLGNLYSWFAVFSSFLLAHY). At 2497 to 2514 (LRHDKIYLHKTSLLILAS) the chain is on the extracellular side. Residues 2515–2535 (LCFLLLSSIGVTLTLYIFGIL) form a helical membrane-spanning segment. The Cytoplasmic portion of the chain corresponds to 2536–2572 (QLVNKIVHVVAFVSNKGLEDRPIAEILACRNLHYLLV). Residues 2573–2593 (YLFICILGLLVHPMIYCILLF) form a helical membrane-spanning segment. Residues 2594 to 2615 (DIIFTEETLQNVIASVTRNYQS) lie on the Extracellular side of the membrane. A helical transmembrane segment spans residues 2616–2636 (IVWTGLLALILLYFFSILGFL). At 2637-2735 (YFRHDFYLEV…FIWRVAYDMT (99 aa)) the chain is on the cytoplasmic side. A compositionally biased stretch (polar residues) spans 2655 to 2666 (ATISSGIPSETC). The interval 2655–2685 (ATISSGIPSETCPSEGCPGLQPSEKDDNDDE) is disordered. Residues 2736 to 2756 (FFVVLIVIVLNLIFGVIIDTF) form a helical membrane-spanning segment. The Extracellular portion of the chain corresponds to 2757-2892 (GDLRAEKNEK…RAFMEQFQPR (136 aa)).

The protein belongs to the InsP3 receptor family. Interacts with myo-1, myo-2, unc-54/myo-4 and nmy-2. Also interacts with iri-1. As to expression, isoform a is expressed in the anterior cells of the pharyngeal terminal bulb, vulva, rectal epithelial cells, spicule protractor muscles of the proctodeum and male-specific neuron CP8 or CP9. Isoform d is expressed in the spermatheca, excretory cell, amphid socket cells, PDA motor neuron, spicule retractor muscles, gubernaculum retractor muscles, posterior oblique muscles, diagonal muscles and the vas deferens. Also expressed in the intestine, pharynx, pharyngeal isthmus, pharyngeal intestinal valve, somatic gonad, hypodermal cells of the vulva, uterine sheath cells, tail, head, LUA motor neuron and the embryonic epidermis (at protein level).

The protein localises to the endoplasmic reticulum membrane. Its function is as follows. Receptor for inositol 1,4,5-trisphosphate, a second messenger that regulates intracellular calcium homeostasis. Binds in vitro to both inositol 1,4,5-trisphosphate (1,4,5-InsP3) and inositol 2,4,5-trisphosphate (2,4,5-InsP3) with high affinity and does not discriminate between the phosphate at 1 or 2 position. Can also bind inositol 1,3,4,5-tetrakisphosphate (1,3,4,5-InsP4) and inositol 4,5-bisphosphate (4,5-InsP2), but with lower affinity. Acts as a timekeeper/rhythm generator via calcium signaling, affecting the defecation cycle and pharyngeal pumping. Affects normal hermaphrodite and male fertility as a participant in intracellular signaling by acting downstream of let-23/lin-3 which regulates ovulation, spermathecal valve dilation and male mating behavior. Important for early embryonic development; controls epidermal cell migration and may also regulate filopodial protrusive activity during epithelial morphogenesis. Component of inositol trisphosphate (IP3)-mediated downstream signaling pathways that controls amphid sensory neuronal (ASH)-mediated response to nose touch and benzaldehyde but not other ASH-mediated responses. Involved in modulating lifespan, acting downstream of transcription factor atf-6. The protein is Inositol 1,4,5-trisphosphate receptor itr-1 of Caenorhabditis elegans.